We begin with the raw amino-acid sequence, 289 residues long: uncharacterized protein (289 aa).

The next 9 membrane-spanning stretches (helical) occupy residues 13-32 (INFAYPIPLLSLLAFMLSGS), 37-59 (LIISYIFAFSFFTAANLWNHLND), 80-99 (IVTEFVVAFYFVSFLLIFFI), 104-121 (EIALLLTGLSVVLTWLYS), 141-160 (VFTYILCSFSFPLSFWTIFS), 165-183 (VGVVFTLATGFTYLSGFFL), 203-225 (VLSPSTLLIISVMLFIASTFVVI), 235-252 (TSSLLVLTVYPPILFAIY), and 265-287 (IISSLKIYTYSYLGFLIAFAIGC).

It localises to the cell membrane. This is an uncharacterized protein from Archaeoglobus fulgidus (strain ATCC 49558 / DSM 4304 / JCM 9628 / NBRC 100126 / VC-16).